We begin with the raw amino-acid sequence, 89 residues long: Porphobilinogen deaminase (89 aa).

This sequence belongs to the HMBS family. As to quaternary structure, monomer. It depends on dipyrromethane as a cofactor.

It carries out the reaction 4 porphobilinogen + H2O = hydroxymethylbilane + 4 NH4(+). Its pathway is porphyrin-containing compound metabolism; protoporphyrin-IX biosynthesis; coproporphyrinogen-III from 5-aminolevulinate: step 2/4. Functionally, tetrapolymerization of the monopyrrole PBG into the hydroxymethylbilane pre-uroporphyrinogen in several discrete steps. The sequence is that of Porphobilinogen deaminase (hemC) from Dickeya chrysanthemi (Pectobacterium chrysanthemi).